We begin with the raw amino-acid sequence, 244 residues long: Osmotin-like protein OSM34 (244 aa).

Residues Met1–Ala22 form the signal peptide. Disulfide bonds link Cys31-Cys222, Cys72-Cys82, Cys87-Cys93, Cys138-Cys212, Cys143-Cys195, Cys151-Cys161, Cys165-Cys174, and Cys175-Cys182.

The protein belongs to the thaumatin family.

In Arabidopsis thaliana (Mouse-ear cress), this protein is Osmotin-like protein OSM34 (OSM34).